A 106-amino-acid polypeptide reads, in one-letter code: Large ribosomal subunit protein bL21c (106 aa).

Belongs to the bacterial ribosomal protein bL21 family. As to quaternary structure, part of the 50S ribosomal subunit.

It is found in the plastid. The protein resides in the chloroplast. This protein binds to 23S rRNA. This Gracilaria tenuistipitata var. liui (Red alga) protein is Large ribosomal subunit protein bL21c.